Here is a 494-residue protein sequence, read N- to C-terminus: Cytochrome P450 2G1 (494 aa).

Position 439 (Cys-439) interacts with heme.

Belongs to the cytochrome P450 family. Requires heme as cofactor. In terms of tissue distribution, olfactory epithelium.

It localises to the endoplasmic reticulum membrane. It is found in the microsome membrane. It carries out the reaction an organic molecule + reduced [NADPH--hemoprotein reductase] + O2 = an alcohol + oxidized [NADPH--hemoprotein reductase] + H2O + H(+). In terms of biological role, cytochromes P450 are a group of heme-thiolate monooxygenases. This isozyme seems to be implicated in olfaction. The protein is Cytochrome P450 2G1 (Cyp2g1) of Rattus norvegicus (Rat).